The primary structure comprises 314 residues: tRNA dimethylallyltransferase (314 aa).

An ATP-binding site is contributed by 13–20 (GPTAVGKT). 15–20 (TAVGKT) provides a ligand contact to substrate. The interval 38 to 41 (DSMQ) is interaction with substrate tRNA.

Belongs to the IPP transferase family. Monomer. Mg(2+) is required as a cofactor.

The enzyme catalyses adenosine(37) in tRNA + dimethylallyl diphosphate = N(6)-dimethylallyladenosine(37) in tRNA + diphosphate. Functionally, catalyzes the transfer of a dimethylallyl group onto the adenine at position 37 in tRNAs that read codons beginning with uridine, leading to the formation of N6-(dimethylallyl)adenosine (i(6)A). This is tRNA dimethylallyltransferase from Bacillus subtilis (strain 168).